The following is a 290-amino-acid chain: 4-hydroxy-tetrahydrodipicolinate synthase (290 aa).

Thr44 provides a ligand contact to pyruvate. Tyr132 serves as the catalytic Proton donor/acceptor. The Schiff-base intermediate with substrate role is filled by Lys160. A pyruvate-binding site is contributed by Ile202.

It belongs to the DapA family. As to quaternary structure, homotetramer; dimer of dimers.

The protein resides in the cytoplasm. It carries out the reaction L-aspartate 4-semialdehyde + pyruvate = (2S,4S)-4-hydroxy-2,3,4,5-tetrahydrodipicolinate + H2O + H(+). The protein operates within amino-acid biosynthesis; L-lysine biosynthesis via DAP pathway; (S)-tetrahydrodipicolinate from L-aspartate: step 3/4. Functionally, catalyzes the condensation of (S)-aspartate-beta-semialdehyde [(S)-ASA] and pyruvate to 4-hydroxy-tetrahydrodipicolinate (HTPA). The sequence is that of 4-hydroxy-tetrahydrodipicolinate synthase from Geobacter sulfurreducens (strain ATCC 51573 / DSM 12127 / PCA).